Consider the following 265-residue polypeptide: 3-methyl-2-oxobutanoate hydroxymethyltransferase (265 aa).

Residues Asp45 and Asp84 each coordinate Mg(2+). Residues 45-46 (DS), Asp84, and Lys112 each bind 3-methyl-2-oxobutanoate. Mg(2+) is bound at residue Glu114. Glu181 serves as the catalytic Proton acceptor.

This sequence belongs to the PanB family. Homodecamer; pentamer of dimers. Mg(2+) is required as a cofactor.

The protein resides in the cytoplasm. It carries out the reaction 3-methyl-2-oxobutanoate + (6R)-5,10-methylene-5,6,7,8-tetrahydrofolate + H2O = 2-dehydropantoate + (6S)-5,6,7,8-tetrahydrofolate. It functions in the pathway cofactor biosynthesis; (R)-pantothenate biosynthesis; (R)-pantoate from 3-methyl-2-oxobutanoate: step 1/2. Its function is as follows. Catalyzes the reversible reaction in which hydroxymethyl group from 5,10-methylenetetrahydrofolate is transferred onto alpha-ketoisovalerate to form ketopantoate. The sequence is that of 3-methyl-2-oxobutanoate hydroxymethyltransferase from Yersinia pseudotuberculosis serotype O:1b (strain IP 31758).